The primary structure comprises 265 residues: MAASVAPGVRTLWWAGAAWLRQGGIRELFRPRIEGSTPGRDFSLSHYQSTVIVERWWKVPLAGEGRKPHLHRRHRVYKLVEDTKHRPKDNLELILTQSVDEIGVRGDLVSVKKSVGRNKLLSQGLAVYASPENRKLFEEEKSLRREGKLEKIQTKAGEATVKFLRSCHLEVGMKNNVKWELNPEIVARHFFKNLGVVVAPHALRLPEEPITRWGEYWCDVTVNGLDTVRVPMSVVLFQKPKTKRYKHWLAQQAAKSVAPTNPQAV.

A mitochondrion-targeting transit peptide spans 1–49; the sequence is MAASVAPGVRTLWWAGAAWLRQGGIRELFRPRIEGSTPGRDFSLSHYQS.

The protein belongs to the bacterial ribosomal protein bL9 family. Component of the mitochondrial ribosome large subunit (39S) which comprises a 16S rRNA and about 50 distinct proteins.

It is found in the mitochondrion. The protein is Large ribosomal subunit protein bL9m (Mrpl9) of Mus musculus (Mouse).